A 72-amino-acid polypeptide reads, in one-letter code: Translation initiation factor IF-1 (72 aa).

The 72-residue stretch at 1–72 (MAKEDSIEMQ…TKGRIVFRAR (72 aa)) folds into the S1-like domain.

Belongs to the IF-1 family. As to quaternary structure, component of the 30S ribosomal translation pre-initiation complex which assembles on the 30S ribosome in the order IF-2 and IF-3, IF-1 and N-formylmethionyl-tRNA(fMet); mRNA recruitment can occur at any time during PIC assembly.

The protein resides in the cytoplasm. Its function is as follows. One of the essential components for the initiation of protein synthesis. Stabilizes the binding of IF-2 and IF-3 on the 30S subunit to which N-formylmethionyl-tRNA(fMet) subsequently binds. Helps modulate mRNA selection, yielding the 30S pre-initiation complex (PIC). Upon addition of the 50S ribosomal subunit IF-1, IF-2 and IF-3 are released leaving the mature 70S translation initiation complex. In Shewanella amazonensis (strain ATCC BAA-1098 / SB2B), this protein is Translation initiation factor IF-1.